Here is a 521-residue protein sequence, read N- to C-terminus: Serine/threonine-protein kinase A (521 aa).

Residues 15–289 form the Protein kinase domain; the sequence is YQLVELVGSG…DVIIRAIDAI (275 aa). ATP-binding positions include 21-29 and lysine 45; that span reads VGSGAMGQV. Aspartate 148 functions as the Proton acceptor in the catalytic mechanism.

It belongs to the protein kinase superfamily. Ser/Thr protein kinase family. Autophosphorylated.

The enzyme catalyses L-seryl-[protein] + ATP = O-phospho-L-seryl-[protein] + ADP + H(+). The catalysed reaction is L-threonyl-[protein] + ATP = O-phospho-L-threonyl-[protein] + ADP + H(+). Its function is as follows. Protein kinase that regulates cellular motility via phosphorylation of membrane proteins. The protein is Serine/threonine-protein kinase A (spkA) of Synechocystis sp. (strain ATCC 27184 / PCC 6803 / Kazusa).